The primary structure comprises 364 residues: Heat-inducible transcription repressor HrcA (364 aa).

Belongs to the HrcA family.

Negative regulator of class I heat shock genes (grpE-dnaK-dnaJ and groELS operons). Prevents heat-shock induction of these operons. The sequence is that of Heat-inducible transcription repressor HrcA from Cyanothece sp. (strain PCC 7425 / ATCC 29141).